A 285-amino-acid chain; its full sequence is MKTLKHALIVYKVGNPQAEKTAHDIQHWFYNKNVTSNLFSSDIPESQLKQSLVHTQVAIILGGDGTFLSISRNLIEKQIPVLGINFGQVGFLVEIHPENWPQMLEQLYSHKLVLQKKIVLSWSIIRHNQVIKNGFAINDVVVGRGALARVLAVDVSINKHHIGVIRSDGILVSTPLGTSGYTISAHGPLVHPDVQALTLTSVSTLFRSTPPLVLPLSTTITLTPSPHAIEPFLTVDGQEGFVLKPNDSVGIQGIKSGLLIYTTANYSYLQHLQKKGLLSSTDFNL.

The active-site Proton acceptor is D64. NAD(+) contacts are provided by residues 64–65 (DG), 138–139 (ND), R149, R166, D168, L176, 179–184 (SGYTIS), and Q238.

The protein belongs to the NAD kinase family. The cofactor is a divalent metal cation.

It localises to the cytoplasm. The catalysed reaction is NAD(+) + ATP = ADP + NADP(+) + H(+). Functionally, involved in the regulation of the intracellular balance of NAD and NADP, and is a key enzyme in the biosynthesis of NADP. Catalyzes specifically the phosphorylation on 2'-hydroxyl of the adenosine moiety of NAD to yield NADP. This is NAD kinase from Lawsonia intracellularis (strain PHE/MN1-00).